The following is a 449-amino-acid chain: Phosphoglucosamine mutase (449 aa).

Ser104 functions as the Phosphoserine intermediate in the catalytic mechanism. The Mg(2+) site is built by Ser104, Asp243, Asp245, and Asp247. Position 104 is a phosphoserine (Ser104).

It belongs to the phosphohexose mutase family. Requires Mg(2+) as cofactor. Activated by phosphorylation.

The catalysed reaction is alpha-D-glucosamine 1-phosphate = D-glucosamine 6-phosphate. Catalyzes the conversion of glucosamine-6-phosphate to glucosamine-1-phosphate. In Xanthomonas campestris pv. campestris (strain 8004), this protein is Phosphoglucosamine mutase.